The primary structure comprises 80 residues: RNA-binding protein Hfq (80 aa).

The region spanning 10–70 (DIFLNQVRKE…ISTISPMKSV (61 aa)) is the Sm domain.

It belongs to the Hfq family. In terms of assembly, homohexamer.

In terms of biological role, RNA chaperone that binds small regulatory RNA (sRNAs) and mRNAs to facilitate mRNA translational regulation in response to envelope stress, environmental stress and changes in metabolite concentrations. Also binds with high specificity to tRNAs. The chain is RNA-binding protein Hfq from Ruminiclostridium cellulolyticum (strain ATCC 35319 / DSM 5812 / JCM 6584 / H10) (Clostridium cellulolyticum).